The sequence spans 438 residues: Aspartate--tRNA(Asp/Asn) ligase (438 aa).

Residue E176 participates in L-aspartate binding. Residues Q198–K201 form an aspartate region. R220 serves as a coordination point for L-aspartate. ATP is bound by residues R220–E222, R228–L230, and E361. 2 residues coordinate Mg(2+): E361 and S364. Residues S364 and R368 each contribute to the L-aspartate site. G409 to R412 serves as a coordination point for ATP.

This sequence belongs to the class-II aminoacyl-tRNA synthetase family. Type 2 subfamily. In terms of assembly, homodimer. Mg(2+) is required as a cofactor.

The protein resides in the cytoplasm. It carries out the reaction tRNA(Asx) + L-aspartate + ATP = L-aspartyl-tRNA(Asx) + AMP + diphosphate. Its function is as follows. Aspartyl-tRNA synthetase with relaxed tRNA specificity since it is able to aspartylate not only its cognate tRNA(Asp) but also tRNA(Asn). Reaction proceeds in two steps: L-aspartate is first activated by ATP to form Asp-AMP and then transferred to the acceptor end of tRNA(Asp/Asn). This chain is Aspartate--tRNA(Asp/Asn) ligase, found in Methanococcus maripaludis (strain C6 / ATCC BAA-1332).